The sequence spans 131 residues: Cytochrome c-552 (131 aa).

Heme c contacts are provided by cysteine 11, cysteine 14, histidine 15, and methionine 69.

In terms of processing, binds 1 heme c group covalently per subunit.

Its function is as follows. This monoheme basic protein appears to function as an electron donor to cytochrome oxidase in T.thermophilus. This is Cytochrome c-552 (cycA) from Thermus thermophilus.